The following is a 318-amino-acid chain: Homeobox-leucine zipper protein ATHB-4 (318 aa).

Disordered regions lie at residues 1-23 (MGER…KEPS) and 128-165 (ARGG…RKKL). A compositionally biased stretch (low complexity) spans 8–17 (LGLSLSLGNS). Over residues 128-140 (ARGGDENEAERAS) the composition is skewed to basic and acidic residues. A DNA-binding region (homeobox) is located at residues 160–219 (GSRKKLRLSKDQALVLEETFKEHSTLNPKQKLALAKQLNLRARQVEVWFQNRRARTKLKQ). The interval 227 to 248 (LKRCCDNLTEENRRLQKEVSEL) is leucine-zipper.

This sequence belongs to the HD-ZIP homeobox family. Class II subfamily.

Its subcellular location is the nucleus. In terms of biological role, probable transcription factor. The polypeptide is Homeobox-leucine zipper protein ATHB-4 (ATHB-4) (Arabidopsis thaliana (Mouse-ear cress)).